Reading from the N-terminus, the 110-residue chain is Large ribosomal subunit protein uL24 (110 aa).

Belongs to the universal ribosomal protein uL24 family. Part of the 50S ribosomal subunit.

Its function is as follows. One of two assembly initiator proteins, it binds directly to the 5'-end of the 23S rRNA, where it nucleates assembly of the 50S subunit. One of the proteins that surrounds the polypeptide exit tunnel on the outside of the subunit. This chain is Large ribosomal subunit protein uL24, found in Thermus thermophilus (strain ATCC BAA-163 / DSM 7039 / HB27).